A 431-amino-acid polypeptide reads, in one-letter code: Ubiquitin-like modifier-activating enzyme 5 (431 aa).

5 residues coordinate ATP: G92, D113, K136, N159, and N197. Zn(2+) contacts are provided by C239 and C242. Residue C263 is the Glycyl thioester intermediate of the active site. C316 and C321 together coordinate Zn(2+). The segment at 339 to 396 (AKAKMEADASTTIDEGPLHDDNEWNISVVDDENEKDTTKAASSSDTLPEGLTRELPVA) is disordered.

It belongs to the ubiquitin-activating E1 family. UBA5 subfamily.

Functionally, E1-like enzyme which activates UFM1. This Arabidopsis thaliana (Mouse-ear cress) protein is Ubiquitin-like modifier-activating enzyme 5.